The following is a 113-amino-acid chain: Ribulose bisphosphate carboxylase small subunit (113 aa).

It belongs to the RuBisCO small chain family. In terms of assembly, heterohexadecamer of 8 large and 8 small subunits. Forms a CsoS2-CsoS1-RuBisCO complex.

It localises to the carboxysome. In terms of biological role, ruBisCO catalyzes two reactions: the carboxylation of D-ribulose 1,5-bisphosphate, the primary event in carbon dioxide fixation, as well as the oxidative fragmentation of the pentose substrate in the photorespiration process. Both reactions occur simultaneously and in competition at the same active site. Although the small subunit is not catalytic it is essential for maximal activity. There are estimated to be 152 RuBisCO holoenzymes per carboxysome. This is Ribulose bisphosphate carboxylase small subunit from Prochlorococcus marinus subsp. pastoris (strain CCMP1986 / NIES-2087 / MED4).